We begin with the raw amino-acid sequence, 151 residues long: 3-dehydroquinate dehydratase (151 aa).

Catalysis depends on Tyr24, which acts as the Proton acceptor. Substrate is bound by residues Asn76, His82, and Asp89. His102 acts as the Proton donor in catalysis. Substrate-binding positions include 103-104 (VS) and Arg113.

Belongs to the type-II 3-dehydroquinase family. Homododecamer.

It catalyses the reaction 3-dehydroquinate = 3-dehydroshikimate + H2O. Its pathway is metabolic intermediate biosynthesis; chorismate biosynthesis; chorismate from D-erythrose 4-phosphate and phosphoenolpyruvate: step 3/7. Functionally, catalyzes a trans-dehydration via an enolate intermediate. The sequence is that of 3-dehydroquinate dehydratase from Rhodopseudomonas palustris (strain ATCC BAA-98 / CGA009).